Reading from the N-terminus, the 505-residue chain is Succinyl-CoA:acetate CoA-transferase (505 aa).

269 to 273 provides a ligand contact to CoA; sequence GVGNV. Glutamate 294 functions as the 5-glutamyl coenzyme A thioester intermediate in the catalytic mechanism. 4 residues coordinate CoA: isoleucine 364, asparagine 384, glycine 388, and lysine 408.

It belongs to the acetyl-CoA hydrolase/transferase family. Homodimer.

The enzyme catalyses succinyl-CoA + acetate = succinate + acetyl-CoA. Its pathway is metabolic intermediate biosynthesis; acetyl-CoA biosynthesis. Subject to competitive inhibition by coenzyme A (CoA). In terms of biological role, utilizes succinyl-CoA to convert toxic acetate to acetyl-CoA and succinate. Required for growth on acetic acid and for resistance to high levels of acetic acid. Also has low activity with acetoacetate as substrate. The chain is Succinyl-CoA:acetate CoA-transferase from Acetobacter aceti.